The primary structure comprises 395 residues: MNQTWRAHLQCKLQQLHEQGQYRDLHVTEKAEETWLIRDKKRMLNLASNNYLGLAGDERLKEAAIACTKRYGTGATASRLVVGNHLLYEEVERSICDWKGTERALIVNSGYTANIGAISSLASRHDIVFSDKLNHASIVDGIILSGAEHKRYRHNDLDHLEKLLKMASPEKRKLIVTDTVFSMDGDTAYLRDLVQLKEKYGAIIIVDEAHASGIYGIGGAGLSHIEKNLSQKIDIHMGTFSKALGCYGAYLTGDEIYIEYLQNMMRSFIFTTALPPSTLGAVQKAIEIVKEDNERRENLIANGEYFRTKLRDAGFDIGNSSTHIVPIVVGSNEHALRFSKRLQEAGIAAIAIRPPTVPVHSSRIRFAVTSQHTIADLKWAIDRIIHIAKEEELFV.

Arginine 23 provides a ligand contact to substrate. Pyridoxal 5'-phosphate is bound at residue 110–111; sequence GY. Histidine 135 contacts substrate. Residues serine 182, 207-210, and 239-242 each bind pyridoxal 5'-phosphate; these read DEAH and TFSK. Lysine 242 is subject to N6-(pyridoxal phosphate)lysine. Threonine 356 contributes to the substrate binding site.

The protein belongs to the class-II pyridoxal-phosphate-dependent aminotransferase family. BioF subfamily. As to quaternary structure, homodimer. The cofactor is pyridoxal 5'-phosphate.

The enzyme catalyses 6-carboxyhexanoyl-[ACP] + L-alanine + H(+) = (8S)-8-amino-7-oxononanoate + holo-[ACP] + CO2. Its pathway is cofactor biosynthesis; biotin biosynthesis. In terms of biological role, catalyzes the decarboxylative condensation of pimeloyl-[acyl-carrier protein] and L-alanine to produce 8-amino-7-oxononanoate (AON), [acyl-carrier protein], and carbon dioxide. The polypeptide is Putative 8-amino-7-oxononanoate synthase (bioF) (Bacillus cereus (strain B4264)).